A 455-amino-acid chain; its full sequence is MMMNRDILFHQQQQQQMEENMSNLTSASGDQASVSSGNRTETSGSNINQHHQEQCFVPQSSLKRKRNQPGNPDPEAEVMALSPKTLMATNRFICEVCNKGFQRDQNLQLHKRGHNLPWKLKQRSNKDVVRKKVYVCPEPGCVHHHPSRALGDLTGIKKHFFRKHGEKKWKCEKCSKKYAVQSDWKAHAKTCGTKEYKCDCGTLFSRRDSFITHRAFCDALAEESARAMPNPIMIQASNSPHHHHHQTQQNIGFSSSSQNIISNSNLHGPMKQEESQHHYQNIPPWLISSNPNPNGNNGNLFPPVASSVNTGRSSFPHPSPAMSATALLQKAAQMGSTKSTTPEEEERSSRSSYNNLITTTMAAMMTSPPEPGFGFQDYYMMNHQHHGGGEAFNGGFVPGEEKNDVVDDGGGETRDFLGLRSLMSHNEILSFANNLGNCLNTSATEQQQQQHSHQD.

Positions 1 to 52 (MMMNRDILFHQQQQQQMEENMSNLTSASGDQASVSSGNRTETSGSNINQHHQ) are disordered. A compositionally biased stretch (polar residues) spans 17–49 (MEENMSNLTSASGDQASVSSGNRTETSGSNINQ). S82 bears the Phosphoserine mark. 2 C2H2-type zinc fingers span residues 92-114 (FICE…KRGH) and 134-164 (YVCP…FRKH). The Nuclear localization signal motif lies at 156–163 (IKKHFFRK). Residues 169 to 192 (WKCEKCSKKYAVQSDWKAHAKTCG) form a C2H2-type 2; degenerate zinc finger. Residues C171, C174, H187, C191, C198, C200, H213, and C217 each coordinate Zn(2+). The CCHC-type 2; atypical zinc-finger motif lies at 196-219 (YKCDCGTLFSRRDSFITHRAFCDA). Residues 206–218 (RRDSFITHRAFCD) form an SHR-binding region. The interval 235-351 (QASNSPHHHH…PEEEERSSRS (117 aa)) is disordered. Composition is skewed to low complexity over residues 248–265 (QQNI…SNSN) and 288–299 (SSNPNPNGNNGN).

Its subcellular location is the nucleus. Probable transcription factor. This is Protein indeterminate-domain 7 from Arabidopsis thaliana (Mouse-ear cress).